The sequence spans 322 residues: tRNA dimethylallyltransferase (322 aa).

19–26 (GPTASGKT) contacts ATP. Substrate is bound at residue 21-26 (TASGKT). Interaction with substrate tRNA stretches follow at residues 44–47 (DSAL), 168–172 (QRIQR), and 255–260 (RCVGYR).

Belongs to the IPP transferase family. Monomer. Mg(2+) is required as a cofactor.

The enzyme catalyses adenosine(37) in tRNA + dimethylallyl diphosphate = N(6)-dimethylallyladenosine(37) in tRNA + diphosphate. Catalyzes the transfer of a dimethylallyl group onto the adenine at position 37 in tRNAs that read codons beginning with uridine, leading to the formation of N6-(dimethylallyl)adenosine (i(6)A). The sequence is that of tRNA dimethylallyltransferase from Cupriavidus taiwanensis (strain DSM 17343 / BCRC 17206 / CCUG 44338 / CIP 107171 / LMG 19424 / R1) (Ralstonia taiwanensis (strain LMG 19424)).